A 421-amino-acid polypeptide reads, in one-letter code: Mitochondrial distribution and morphology protein 10 (421 aa).

Belongs to the MDM10 family. Component of the ER-mitochondria encounter structure (ERMES) or MDM complex, composed of MMM1, MDM10, MDM12 and MDM34. Associates with the mitochondrial outer membrane sorting assembly machinery SAM(core) complex.

It is found in the mitochondrion outer membrane. Its function is as follows. Component of the ERMES/MDM complex, which serves as a molecular tether to connect the endoplasmic reticulum and mitochondria. Components of this complex are involved in the control of mitochondrial shape and protein biogenesis and may function in phospholipid exchange. MDM10 is involved in the late assembly steps of the general translocase of the mitochondrial outer membrane (TOM complex). Functions in the TOM40-specific route of the assembly of outer membrane beta-barrel proteins, including the association of TOM40 with the receptor TOM22 and small TOM proteins. Can associate with the SAM(core) complex as well as the MDM12-MMM1 complex, both involved in late steps of the major beta-barrel assembly pathway, that is responsible for biogenesis of all outer membrane beta-barrel proteins. May act as a switch that shuttles between both complexes and channels precursor proteins into the TOM40-specific pathway. Plays a role in mitochondrial morphology and in the inheritance of mitochondria. This Vanderwaltozyma polyspora (strain ATCC 22028 / DSM 70294 / BCRC 21397 / CBS 2163 / NBRC 10782 / NRRL Y-8283 / UCD 57-17) (Kluyveromyces polysporus) protein is Mitochondrial distribution and morphology protein 10.